We begin with the raw amino-acid sequence, 740 residues long: Probable RNA-dependent RNA polymerase 1 (740 aa).

The protein belongs to the RdRP family.

The enzyme catalyses RNA(n) + a ribonucleoside 5'-triphosphate = RNA(n+1) + diphosphate. In terms of biological role, probably involved in the RNA silencing pathway and required for the generation of small interfering RNAs (siRNAs). In Oryza sativa subsp. japonica (Rice), this protein is Probable RNA-dependent RNA polymerase 1 (RDR1).